The chain runs to 303 residues: Taste receptor type 2 member 13 (303 aa).

Over 1–7 (MESALPS) the chain is Extracellular. A helical transmembrane segment spans residues 8-28 (ILTLVIIAEFIIGNLSNGFIV). At 29-55 (LINYIDWVSKRELSSVDKLLIILAISR) the chain is on the cytoplasmic side. A helical transmembrane segment spans residues 56 to 76 (IGLIWEILVSWFLALHYLAIF). Topologically, residues 77-85 (VSGTGLRIM) are extracellular. A helical transmembrane segment spans residues 86 to 106 (IFSWIVSNHFSLWLATILSIF). The Cytoplasmic segment spans residues 107 to 128 (YLLKIASFSSPAFLYLKWRVNK). The chain crosses the membrane as a helical span at residues 129-149 (VILMILLGSLVFLFLNLIQIN). Topologically, residues 150 to 184 (IHIKDWLDRYEGNTTWNFSMSDFVTFSVSVKFTMT) are extracellular. Asn-162 and Asn-166 each carry an N-linked (GlcNAc...) asparagine glycan. Residues 185 to 205 (MFSLTPFTVALISFSLLIFSL) form a helical membrane-spanning segment. The Cytoplasmic portion of the chain corresponds to 206-232 (QKHLQKMQLNYKGHREPRTKVHTNALK). The helical transmembrane segment at 233-253 (IVISFLLLYASFFLCILISWI) threads the bilayer. The Extracellular segment spans residues 254-261 (SELYQNTA). A helical membrane pass occupies residues 262–282 (IYMLCETIGLFYPSSHSFLLI). Topologically, residues 283–303 (LGNPKLRQAFLLVAAKVWAKR) are cytoplasmic.

The protein belongs to the G-protein coupled receptor T2R family.

Its subcellular location is the membrane. Its function is as follows. Receptor that may play a role in the perception of bitterness and is gustducin-linked. May play a role in sensing the chemical composition of the gastrointestinal content. The activity of this receptor may stimulate alpha gustducin, mediate PLC-beta-2 activation and lead to the gating of TRPM5. This chain is Taste receptor type 2 member 13 (TAS2R13), found in Pongo pygmaeus (Bornean orangutan).